We begin with the raw amino-acid sequence, 187 residues long: Ribulose bisphosphate carboxylase small subunit, chloroplastic (187 aa).

The transit peptide at 1–56 directs the protein to the chloroplast; the sequence is MASSVMSTATVATGANAAQASMIASFNGLKSAASFPVTRKQDLDITSIASNGGRVE.

This sequence belongs to the RuBisCO small chain family. Heterohexadecamer of 8 large and 8 small subunits.

The protein localises to the plastid. Its subcellular location is the chloroplast. RuBisCO catalyzes two reactions: the carboxylation of D-ribulose 1,5-bisphosphate, the primary event in carbon dioxide fixation, as well as the oxidative fragmentation of the pentose substrate. Both reactions occur simultaneously and in competition at the same active site. Although the small subunit is not catalytic it is essential for maximal activity. This chain is Ribulose bisphosphate carboxylase small subunit, chloroplastic, found in Capsicum annuum (Capsicum pepper).